The primary structure comprises 636 residues: uncharacterized protein (636 aa).

2 disordered regions span residues 1 to 22 and 81 to 107; these read MYNVRGDLNRKTPSDGNVNEIG and SSQTYNRYPNGGNSAGSDMYSTSPQNN. At 1-170 the chain is on the cytoplasmic side; the sequence is MYNVRGDLNR…YFVGGEGLMQ (170 aa). Residues 171–191 traverse the membrane as a helical; Signal-anchor for type II membrane protein segment; the sequence is LLFLLFLAAGTGMLFIGLPIL. The Lumenal portion of the chain corresponds to 192-636; the sequence is TYTGHNSLAS…RPKNSLMDGC (445 aa). Residues 218-587 enclose the GH16 domain; that stretch reads LRYGSLIDPD…YVRIYQDSSD (370 aa). 6 N-linked (GlcNAc...) asparagine glycosylation sites follow: N291, N378, N429, N464, N489, and N616.

It belongs to the SKN1/KRE6 family.

It is found in the endoplasmic reticulum membrane. Its function is as follows. Required for synthesis of the major beta-glucans of the yeast cell wall. This is an uncharacterized protein from Schizosaccharomyces pombe (strain 972 / ATCC 24843) (Fission yeast).